Here is a 292-residue protein sequence, read N- to C-terminus: Ribosomal protein L11 methyltransferase (292 aa).

T136, G159, D181, and N228 together coordinate S-adenosyl-L-methionine.

The protein belongs to the methyltransferase superfamily. PrmA family.

It is found in the cytoplasm. The catalysed reaction is L-lysyl-[protein] + 3 S-adenosyl-L-methionine = N(6),N(6),N(6)-trimethyl-L-lysyl-[protein] + 3 S-adenosyl-L-homocysteine + 3 H(+). Its function is as follows. Methylates ribosomal protein L11. This chain is Ribosomal protein L11 methyltransferase, found in Rhizobium rhizogenes (strain K84 / ATCC BAA-868) (Agrobacterium radiobacter).